A 416-amino-acid chain; its full sequence is Gamma-glutamyl phosphate reductase (416 aa).

It belongs to the gamma-glutamyl phosphate reductase family.

The protein resides in the cytoplasm. It catalyses the reaction L-glutamate 5-semialdehyde + phosphate + NADP(+) = L-glutamyl 5-phosphate + NADPH + H(+). It participates in amino-acid biosynthesis; L-proline biosynthesis; L-glutamate 5-semialdehyde from L-glutamate: step 2/2. In terms of biological role, catalyzes the NADPH-dependent reduction of L-glutamate 5-phosphate into L-glutamate 5-semialdehyde and phosphate. The product spontaneously undergoes cyclization to form 1-pyrroline-5-carboxylate. The polypeptide is Gamma-glutamyl phosphate reductase (Salmonella arizonae (strain ATCC BAA-731 / CDC346-86 / RSK2980)).